A 199-amino-acid chain; its full sequence is Protein GrpE (199 aa).

The span at 1–24 (MSKQNKKDWKKFKDEHKEEHKVEN) shows a compositional bias: basic and acidic residues. Residues 1 to 52 (MSKQNKKDWKKFKDEHKEEHKVENEILEEETDEESQHQEPALGHPSYTALEE) are disordered.

Belongs to the GrpE family. In terms of assembly, homodimer.

The protein localises to the cytoplasm. Participates actively in the response to hyperosmotic and heat shock by preventing the aggregation of stress-denatured proteins, in association with DnaK and GrpE. It is the nucleotide exchange factor for DnaK and may function as a thermosensor. Unfolded proteins bind initially to DnaJ; upon interaction with the DnaJ-bound protein, DnaK hydrolyzes its bound ATP, resulting in the formation of a stable complex. GrpE releases ADP from DnaK; ATP binding to DnaK triggers the release of the substrate protein, thus completing the reaction cycle. Several rounds of ATP-dependent interactions between DnaJ, DnaK and GrpE are required for fully efficient folding. The sequence is that of Protein GrpE from Legionella pneumophila.